Consider the following 1274-residue polypeptide: Meiosis inhibitor protein 1 (1274 aa).

As to expression, expressed predominantly in testis. Weakly expressed in spleen and thymus. Expressed in the ovaries, Fallopian tubes and uterus.

Required for normal meiotic chromosome synapsis. May be involved in the formation of meiotic double-strand breaks (DSBs) in spermatocytes. In Homo sapiens (Human), this protein is Meiosis inhibitor protein 1.